The primary structure comprises 267 residues: DNA damage-regulated autophagy modulator protein 2 (267 aa).

Helical transmembrane passes span 8–28 (LSFL…FSYI), 53–73 (RCLF…TMYV), 87–107 (LIIK…LGLS), 118–138 (FIVH…YMFV), 160–180 (LLLV…SSIL), and 203–223 (VLHL…FGFF).

The protein belongs to the DRAM/TMEM150 family. In terms of tissue distribution, expressed in the retina.

It is found in the lysosome membrane. Its subcellular location is the photoreceptor inner segment. It localises to the apical cell membrane. Its function is as follows. Plays a role in the initiation of autophagy. In the retina, might be involved in the process of photoreceptor cells renewal and recycling to preserve visual function. Induces apoptotic cell death when coexpressed with DRAM1. The sequence is that of DNA damage-regulated autophagy modulator protein 2 (Dram2) from Mus musculus (Mouse).